The following is a 78-amino-acid chain: Large ribosomal subunit protein bL28 (78 aa).

Belongs to the bacterial ribosomal protein bL28 family.

The sequence is that of Large ribosomal subunit protein bL28 from Dichelobacter nodosus (strain VCS1703A).